Here is a 173-residue protein sequence, read N- to C-terminus: ATP synthase subunit b (173 aa).

A helical membrane pass occupies residues 18-38; sequence IFWSLVILIIVAVFFYKFFLP.

This sequence belongs to the ATPase B chain family. As to quaternary structure, F-type ATPases have 2 components, F(1) - the catalytic core - and F(0) - the membrane proton channel. F(1) has five subunits: alpha(3), beta(3), gamma(1), delta(1), epsilon(1). F(0) has three main subunits: a(1), b(2) and c(10-14). The alpha and beta chains form an alternating ring which encloses part of the gamma chain. F(1) is attached to F(0) by a central stalk formed by the gamma and epsilon chains, while a peripheral stalk is formed by the delta and b chains.

It is found in the cell membrane. Its function is as follows. F(1)F(0) ATP synthase produces ATP from ADP in the presence of a proton or sodium gradient. F-type ATPases consist of two structural domains, F(1) containing the extramembraneous catalytic core and F(0) containing the membrane proton channel, linked together by a central stalk and a peripheral stalk. During catalysis, ATP synthesis in the catalytic domain of F(1) is coupled via a rotary mechanism of the central stalk subunits to proton translocation. In terms of biological role, component of the F(0) channel, it forms part of the peripheral stalk, linking F(1) to F(0). The chain is ATP synthase subunit b from Bifidobacterium adolescentis (strain ATCC 15703 / DSM 20083 / NCTC 11814 / E194a).